The following is a 508-amino-acid chain: Splicing regulatory glutamine/lysine-rich protein 1 (508 aa).

An RRM domain is found at 66–142 (RTVYVGNLNS…RPLKINHSNN (77 aa)). Phosphoserine is present on residues Ser171 and Ser184. Positions 173–508 (ISAAIEPESG…ENLSTKTEAV (336 aa)) are disordered. Basic and acidic residues predominate over residues 180–189 (ESGKSNERKG). Positions 190-259 (GRSRSHTRSK…KSRSRSHSRD (70 aa)) are enriched in basic residues. The segment covering 260-355 (KRKDTREKIK…DRSKEIDEKR (96 aa)) has biased composition (basic and acidic residues). Thr363 carries the post-translational modification Phosphothreonine. Over residues 372–388 (RRSRSSSRERRRRRSRS) the composition is skewed to basic residues. The span at 419–488 (REKERDHISE…DAPRTEENKI (70 aa)) shows a compositional bias: basic and acidic residues. Residues 489–508 (QHNGNCQLNEENLSTKTEAV) show a composition bias toward polar residues. Residue Lys504 forms a Glycyl lysine isopeptide (Lys-Gly) (interchain with G-Cter in SUMO2) linkage.

This sequence belongs to the splicing factor SR family. As to quaternary structure, homodimer. Binds SFRS1, SFRS2, SFRS3 and SFRS6. Interacts with the spliceosome. Interacts with SREK1IP1.

It localises to the nucleus. In terms of biological role, participates in the regulation of alternative splicing by modulating the activity of other splice facors. Inhibits the splicing activity of SFRS1, SFRS2 and SFRS6. Augments the splicing activity of SFRS3. The polypeptide is Splicing regulatory glutamine/lysine-rich protein 1 (SREK1) (Homo sapiens (Human)).